An 82-amino-acid chain; its full sequence is Neuropeptide-like peptide 36 (82 aa).

The chain is Neuropeptide-like peptide 36 (nlp-36) from Caenorhabditis elegans.